The primary structure comprises 522 residues: Type-2 serine--tRNA ligase (522 aa).

L-serine is bound at residue Ala-319. Cys-321 contacts Zn(2+). Residue Arg-350 participates in L-serine binding. Residues Arg-350 to Glu-352 and Arg-361 to Val-362 contribute to the ATP site. Arg-367–Glu-369 contacts L-serine. Zn(2+) contacts are provided by Glu-369 and Cys-476. ATP is bound at residue Arg-483.

Belongs to the class-II aminoacyl-tRNA synthetase family. Type-2 seryl-tRNA synthetase subfamily. As to quaternary structure, homodimer. It depends on Zn(2+) as a cofactor.

It is found in the cytoplasm. The enzyme catalyses tRNA(Ser) + L-serine + ATP = L-seryl-tRNA(Ser) + AMP + diphosphate + H(+). It carries out the reaction tRNA(Sec) + L-serine + ATP = L-seryl-tRNA(Sec) + AMP + diphosphate + H(+). It participates in aminoacyl-tRNA biosynthesis; selenocysteinyl-tRNA(Sec) biosynthesis; L-seryl-tRNA(Sec) from L-serine and tRNA(Sec): step 1/1. Catalyzes the attachment of serine to tRNA(Ser). Is also able to aminoacylate tRNA(Sec) with serine, to form the misacylated tRNA L-seryl-tRNA(Sec), which will be further converted into selenocysteinyl-tRNA(Sec). This chain is Type-2 serine--tRNA ligase (serS), found in Methanococcus aeolicus (strain ATCC BAA-1280 / DSM 17508 / OCM 812 / Nankai-3).